Reading from the N-terminus, the 563-residue chain is Ataxin-10 homolog (563 aa).

Residue T433 is modified to Phosphothreonine. Residues 544-563 (VSKEEDPGNENSEIISIDED) form a disordered region. Position 559 is a phosphoserine (S559).

This sequence belongs to the ataxin-10 family.

It localises to the cytoplasm. In terms of biological role, may play a role in the regulation of cytokinesis. In Saccharomyces cerevisiae (strain ATCC 204508 / S288c) (Baker's yeast), this protein is Ataxin-10 homolog (CTR86).